A 242-amino-acid polypeptide reads, in one-letter code: Sensory transduction protein LytT (242 aa).

The region spanning 2-116 (HVLIVDDEPL…KITQVIEKAS (115 aa)) is the Response regulatory domain. The HTH LytTR-type domain maps to 137 to 241 (IPIQGEDRIY…VKEFKEKLGL (105 aa)).

Post-translationally, phosphorylated by LytS.

The protein localises to the cytoplasm. In terms of biological role, member of the two-component regulatory system LytS/LytT that probably regulates genes involved in cell wall metabolism. This is Sensory transduction protein LytT (lytT) from Enterococcus faecalis (strain ATCC 700802 / V583).